A 58-amino-acid chain; its full sequence is UPF0337 protein CE1672 (58 aa).

Residues 1-39 (MGLGDKIRNTAEKASGKVKEATGKATDNEKLEAEGKTDQ) show a composition bias toward basic and acidic residues. The segment at 1-58 (MGLGDKIRNTAEKASGKVKEATGKATDNEKLEAEGKTDQFKGNAKNTVENAKDTLRGN) is disordered.

The protein belongs to the UPF0337 (CsbD) family.

The chain is UPF0337 protein CE1672 from Corynebacterium efficiens (strain DSM 44549 / YS-314 / AJ 12310 / JCM 11189 / NBRC 100395).